The following is a 232-amino-acid chain: Clarin-2 (232 aa).

Transmembrane regions (helical) follow at residues 8–28 (VWYG…IVAL), 101–121 (ILLL…FAIL), 139–159 (LWNV…MAAV), and 188–208 (SFWI…VVAI).

Belongs to the clarin family. As to expression, detected in inner ear, particularly in hair bundles of auditory hair cells and is enriched in apical stereocilia. Detected in eye, but not in brain or muscle.

It localises to the cell projection. The protein resides in the stereocilium membrane. In terms of biological role, plays a key role to hearing function. Required for normal organization and maintenance of the stereocilia bundle and for mechano-electrical transduction. The polypeptide is Clarin-2 (Mus musculus (Mouse)).